Consider the following 104-residue polypeptide: Probable guanidinium efflux system subunit GdnD (104 aa).

Helical transmembrane passes span 3–23 (WICL…MNQF), 31–51 (WIFL…LAME), 58–78 (AYAV…ILFY), and 84–104 (GKRI…KLIS).

This sequence belongs to the drug/metabolite transporter (DMT) superfamily. Small multidrug resistance (SMR) (TC 2.A.7.1) family. YkkC/YkkD subfamily. In terms of assembly, the efflux pump is composed of GdnC and GdnD.

Its subcellular location is the cell membrane. In terms of biological role, probably involved in guanidinium transport. This Bacillus licheniformis (strain ATCC 14580 / DSM 13 / JCM 2505 / CCUG 7422 / NBRC 12200 / NCIMB 9375 / NCTC 10341 / NRRL NRS-1264 / Gibson 46) protein is Probable guanidinium efflux system subunit GdnD.